The following is a 656-amino-acid chain: Pyoverdine export ATP-binding/permease protein PvdT (656 aa).

Residues 6-245 (IDLRAIRKSY…SANPAALQAV (240 aa)) enclose the ABC transporter domain. Position 43-50 (43-50 (GASGSGKS)) interacts with ATP. The next 4 membrane-spanning stretches (helical) occupy residues 284-304 (ALTL…LAVG), 538-558 (IAAI…LMTV), 589-609 (LSVV…AALL), and 619-639 (VPAV…FGFM).

This sequence belongs to the ABC transporter superfamily. Macrolide exporter (TC 3.A.1.122) family. In terms of assembly, part of the tripartite efflux system PvdRT-OpmQ, which is composed of an inner membrane component with both ATPase and permease domains, PvdT, a periplasmic membrane fusion protein, PvdR, and an outer membrane component, OpmQ.

The protein localises to the cell inner membrane. Its function is as follows. Part of the tripartite efflux system PvdRT-OpmQ required for the secretion into the extracellular milieu of the siderophore pyoverdine (PVD), which is involved in iron acquisition. This subunit binds PVD and drives its secretion by hydrolyzing ATP. The system is responsible for export of newly synthesized PVD after the final steps of biosynthesis have taken place in the periplasm. It is also responsible for recycling of PVD after internalization of ferri-PVD into the periplasm by the outer-membrane receptor FpvA and release of iron from PVD, thus making PVD available for new cycles of iron uptake. The sequence is that of Pyoverdine export ATP-binding/permease protein PvdT from Pseudomonas savastanoi pv. phaseolicola (strain 1448A / Race 6) (Pseudomonas syringae pv. phaseolicola (strain 1448A / Race 6)).